The chain runs to 125 residues: Large-conductance mechanosensitive channel (125 aa).

3 consecutive transmembrane segments (helical) span residues 19–39 (VGVI…KYII), 42–62 (FLGL…IGNA), and 66–86 (VGSF…VFLM).

It belongs to the MscL family. As to quaternary structure, homopentamer.

It is found in the cell membrane. Functionally, channel that opens in response to stretch forces in the membrane lipid bilayer. May participate in the regulation of osmotic pressure changes within the cell. The sequence is that of Large-conductance mechanosensitive channel from Ligilactobacillus salivarius (strain UCC118) (Lactobacillus salivarius).